The chain runs to 129 residues: Small ribosomal subunit protein uS11 (129 aa).

Belongs to the universal ribosomal protein uS11 family. As to quaternary structure, part of the 30S ribosomal subunit.

In terms of biological role, located on the platform of the 30S subunit. This Methanocaldococcus jannaschii (strain ATCC 43067 / DSM 2661 / JAL-1 / JCM 10045 / NBRC 100440) (Methanococcus jannaschii) protein is Small ribosomal subunit protein uS11.